We begin with the raw amino-acid sequence, 635 residues long: 1-deoxy-D-xylulose-5-phosphate synthase (635 aa).

Thiamine diphosphate contacts are provided by residues H79 and G120–S122. D151 provides a ligand contact to Mg(2+). Thiamine diphosphate contacts are provided by residues G152–A153, N182, Y291, and E372. N182 lines the Mg(2+) pocket.

This sequence belongs to the transketolase family. DXPS subfamily. As to quaternary structure, homodimer. Mg(2+) is required as a cofactor. Requires thiamine diphosphate as cofactor.

It catalyses the reaction D-glyceraldehyde 3-phosphate + pyruvate + H(+) = 1-deoxy-D-xylulose 5-phosphate + CO2. Its pathway is metabolic intermediate biosynthesis; 1-deoxy-D-xylulose 5-phosphate biosynthesis; 1-deoxy-D-xylulose 5-phosphate from D-glyceraldehyde 3-phosphate and pyruvate: step 1/1. Functionally, catalyzes the acyloin condensation reaction between C atoms 2 and 3 of pyruvate and glyceraldehyde 3-phosphate to yield 1-deoxy-D-xylulose-5-phosphate (DXP). This is 1-deoxy-D-xylulose-5-phosphate synthase from Xylella fastidiosa (strain M12).